Reading from the N-terminus, the 561-residue chain is Dihydroxy-acid dehydratase (561 aa).

Cys50 contributes to the [2Fe-2S] cluster binding site. Asp82 serves as a coordination point for Mg(2+). Position 123 (Cys123) interacts with [2Fe-2S] cluster. Asp124 and Lys125 together coordinate Mg(2+). Lys125 bears the N6-carboxylysine mark. Cys195 serves as a coordination point for [2Fe-2S] cluster. Glu447 contributes to the Mg(2+) binding site. Ser473 serves as the catalytic Proton acceptor.

This sequence belongs to the IlvD/Edd family. As to quaternary structure, homodimer. [2Fe-2S] cluster is required as a cofactor. The cofactor is Mg(2+).

The catalysed reaction is (2R)-2,3-dihydroxy-3-methylbutanoate = 3-methyl-2-oxobutanoate + H2O. The enzyme catalyses (2R,3R)-2,3-dihydroxy-3-methylpentanoate = (S)-3-methyl-2-oxopentanoate + H2O. It participates in amino-acid biosynthesis; L-isoleucine biosynthesis; L-isoleucine from 2-oxobutanoate: step 3/4. Its pathway is amino-acid biosynthesis; L-valine biosynthesis; L-valine from pyruvate: step 3/4. Functionally, functions in the biosynthesis of branched-chain amino acids. Catalyzes the dehydration of (2R,3R)-2,3-dihydroxy-3-methylpentanoate (2,3-dihydroxy-3-methylvalerate) into 2-oxo-3-methylpentanoate (2-oxo-3-methylvalerate) and of (2R)-2,3-dihydroxy-3-methylbutanoate (2,3-dihydroxyisovalerate) into 2-oxo-3-methylbutanoate (2-oxoisovalerate), the penultimate precursor to L-isoleucine and L-valine, respectively. The protein is Dihydroxy-acid dehydratase of Crocosphaera subtropica (strain ATCC 51142 / BH68) (Cyanothece sp. (strain ATCC 51142)).